An 894-amino-acid chain; its full sequence is Microsomal triglyceride transfer protein large subunit (894 aa).

Residues 1–18 form the signal peptide; that stretch reads MILLAVLFLCFISSYSAS. The Vitellogenin domain maps to 28–662; it reads LNNDRLYKLK…YVGKTPLHAI (635 aa). A disulfide bridge connects residues Cys174 and Cys194.

Heterodimer; heterodimerizes with the protein disulfide isomerase (P4HB/PDI). Interacts with APOB. Interacts with PRAP1.

It localises to the endoplasmic reticulum. The protein localises to the golgi apparatus. It catalyses the reaction a 1,2-diacyl-sn-glycero-3-phosphocholine(in) = a 1,2-diacyl-sn-glycero-3-phosphocholine(out). It carries out the reaction a 1,2-diacyl-sn-glycero-3-phosphoethanolamine(in) = a 1,2-diacyl-sn-glycero-3-phosphoethanolamine(out). The catalysed reaction is a cholesterol ester(in) = a cholesterol ester(out). The enzyme catalyses a triacyl-sn-glycerol(in) = a triacyl-sn-glycerol(out). Its function is as follows. Catalyzes the transport of triglyceride, cholesteryl ester, and phospholipid between phospholipid surfaces. Required for the assembly and secretion of plasma lipoproteins that contain apolipoprotein B. May be involved in regulating cholesteryl ester biosynthesis in cells that produce lipoproteins. This Sus scrofa (Pig) protein is Microsomal triglyceride transfer protein large subunit (MTTP).